The primary structure comprises 158 residues: Urease accessory protein UreE (158 aa).

This sequence belongs to the UreE family.

It is found in the cytoplasm. Its function is as follows. Involved in urease metallocenter assembly. Binds nickel. Probably functions as a nickel donor during metallocenter assembly. The polypeptide is Urease accessory protein UreE (Corynebacterium urealyticum (strain ATCC 43042 / DSM 7109)).